We begin with the raw amino-acid sequence, 930 residues long: F-box only protein 11 (930 aa).

A disordered region spans residues Met-1 to Ser-150. Residues Ala-7 to Arg-16 show a composition bias toward basic residues. Low complexity predominate over residues Pro-17 to Pro-27. Positions Pro-28–Gln-73 are enriched in pro residues. Positions Pro-117–Asn-132 are enriched in polar residues. The F-box domain maps to Gln-156–Leu-202. PbH1 repeat units lie at residues Gly-398 to Asp-420, His-421 to Asn-443, His-444 to Asp-466, His-467 to Ala-489, Tyr-490 to Glu-512, Lys-513 to Ser-535, Asn-536 to Gly-558, Asp-559 to Thr-581, Asn-582 to Glu-604, Lys-605 to Thr-627, Gly-628 to Asp-650, Asn-651 to Thr-673, Gly-674 to Asn-696, Ser-697 to Thr-719, Asp-720 to Asn-742, Gly-743 to Thr-765, Asn-766 to Asn-788, His-789 to Ser-811, and Gly-812 to Val-833. A UBR-type zinc finger spans residues Gly-836–Glu-907.

As to quaternary structure, component of the SCF(FBXO11) complex consisting of CUL1, RBX1, SKP1 and FBXO11. Interacts with CIITA. In terms of tissue distribution, at 9.5 dpc and 10.5 dpc, expression is restricted to developing heart tissue. By 11.5 dpc and 12.5 dpc, detected in liver and subsequently in muscle by 13.5 dpc. At 14.5 dpc, still detected in heart, liver and muscle and also in the developing secondary palate including the nasal, medial and oral epithelia of the palatal shelves. At 15.5 dpc and 16.5 dpc, expressed in lung, kidney, heart, liver, muscle and adrenal gland. At this time, fusion of the palate shelves has occurred, with expression confined to the nasal and oral epithelia. At 17.5 dpc, expression in the lung is confined to bronchial epithelial cells and is evident in bone marrow, skin, tissue macrophages, osteoblasts, kidney, liver and spleen. At 18.5 dpc, expressed in bone marrow, liver, kidney and muscle but decreases in heart and lung. At this time, first detected in the middle ear epithelium. At the newborn stage, expression is strong in the middle ear where it is confined to mucin-secreting cells, as well as persisting in bone marrow, kidney and liver. Middle ear expression persists in postnatal head tissue at 4 and 13 days after birth and has declined by 21 days after birth. In the adult, expression is seen in alveolar macrophages of the lung, glomeruli and collecting tubules of the kidney, midbrain, heart and muscle.

It localises to the nucleus. It is found in the chromosome. The protein operates within protein modification; protein ubiquitination. Its function is as follows. Substrate recognition component of a SCF (SKP1-CUL1-F-box protein) E3 ubiquitin-protein ligase complex which mediates the ubiquitination and subsequent proteasomal degradation of target proteins, such as DTL/CDT2, BCL6, SNAI1 and PRDM1/BLIMP1. The SCF(FBXO11) complex mediates ubiquitination and degradation of BCL6, thereby playing a role in the germinal center B-cells terminal differentiation toward memory B-cells and plasma cells. The SCF(FBXO11) complex also mediates ubiquitination and degradation of DTL, an important step for the regulation of TGF-beta signaling, cell migration and the timing of the cell-cycle progression and exit. The SCF(FBXO11) complex also catalyzes ubiquitination and degradation of GSK3B-phosphorylated SNAI1. Binds to and neddylates phosphorylated p53/TP53, inhibiting its transcriptional activity. Plays a role in the regulatiom of erythropoiesis but not myelopoiesis or megakaryopoiesis. Mechanistically, activates erythroid genes by mediating the degradation of BAHD1, a heterochromatin-associated protein that recruits corepressors to H3K27me3 marks. Participates in macrophage cell death and inflammation in response to bacterial toxins by regulating the expression of complement 5a receptor 1/C5AR1 and IL-1beta. Acts as a critical regulator to determine the level of MHC-II by mediating the recognition of degron at the P/S/T domain of CIITA leading to its ubiquitination and subsequent degradation via the proteasome. Participates in the antiviral repsonse by initiating the activation of TBK1-IRF3-IFN-I axis. Mediates the 'Lys-63'-linked ubiquitination of TRAF3 to strengthen the interaction between TRAF3 and TBK1. In Mus musculus (Mouse), this protein is F-box only protein 11.